Reading from the N-terminus, the 338-residue chain is Malate dehydrogenase, mitochondrial (338 aa).

The transit peptide at 1–24 directs the protein to the mitochondrion; the sequence is MLSALARPAGAALRRSFSTSAQNN. NAD(+)-binding positions include 31-37 and aspartate 57; that span reads GASGGIG. Serine 33 carries an O-linked (GlcNAc) serine glycan. N6-acetyllysine; alternate occurs at positions 78 and 91. 2 positions are modified to N6-succinyllysine; alternate: lysine 78 and lysine 91. Substrate contacts are provided by arginine 104 and arginine 110. NAD(+) is bound by residues asparagine 117 and 140–142; that span reads IAN. Asparagine 142 contributes to the substrate binding site. Lysine 165 carries the post-translational modification N6-acetyllysine. Arginine 176 contributes to the substrate binding site. Lysine 185 is subject to N6-acetyllysine; alternate. Residue lysine 185 is modified to N6-succinyllysine; alternate. The Proton acceptor role is filled by histidine 200. Position 203 is an N6-succinyllysine (lysine 203). N6-acetyllysine; alternate occurs at positions 215 and 239. Residues lysine 215 and lysine 239 each carry the N6-succinyllysine; alternate modification. Lysine 239 is subject to N6-malonyllysine; alternate. The residue at position 246 (serine 246) is a Phosphoserine. Methionine 251 serves as a coordination point for NAD(+). Lysine 269 carries the post-translational modification N6-succinyllysine. Lysine 296, lysine 301, and lysine 307 each carry N6-acetyllysine; alternate. An N6-succinyllysine; alternate mark is found at lysine 296, lysine 301, and lysine 307. Residue lysine 307 is modified to N6-malonyllysine; alternate. A Phosphothreonine modification is found at threonine 309. Residues lysine 314 and lysine 324 each carry the N6-acetyllysine; alternate modification. N6-succinyllysine; alternate is present on residues lysine 314 and lysine 324. Position 326 is a phosphoserine (serine 326). N6-acetyllysine; alternate occurs at positions 328, 329, and 335. An N6-succinyllysine; alternate modification is found at lysine 328. Residue lysine 329 is modified to N6-malonyllysine; alternate. The residue at position 335 (lysine 335) is an N6-succinyllysine; alternate.

This sequence belongs to the LDH/MDH superfamily. MDH type 1 family. In terms of assembly, homodimer. Acetylation is enhanced after treatment either with trichostin A (TCA) or with nicotinamide (NAM) with the appearance of tri- and tetraacetylations. Glucose also increases acetylation. Acetylation of Lys-239 and Lys-314 is observed in liver mitochondria from fasted mice but not from fed mice.

It is found in the mitochondrion matrix. It catalyses the reaction (S)-malate + NAD(+) = oxaloacetate + NADH + H(+). Its activity is regulated as follows. Enzyme activity is enhanced by acetylation. The chain is Malate dehydrogenase, mitochondrial (Mdh2) from Mus musculus (Mouse).